A 379-amino-acid polypeptide reads, in one-letter code: Phospholipase A1 (379 aa).

The first 20 residues, 1 to 20 (MKFITAILVIFCVYLLSTAG), serve as a signal peptide directing secretion. A propeptide spanning residues 21-73 (DSKILPLKKLPSKIFGHLKSHVDNTVKKPLKVFGHLKSHVENSVGPLRMNKLT) is cleaved from the precursor. A disulfide bridge links Cys-76 with Cys-154. Residue Asn-126 is glycosylated (N-linked (GlcNAc...) asparagine). Residue Ser-204 is the Nucleophile of the active site. The active-site Charge relay system is the Asp-232. 2 disulfide bridges follow: Cys-243/Cys-248 and Cys-285/Cys-291. His-293 (charge relay system) is an active-site residue.

This sequence belongs to the AB hydrolase superfamily. Lipase family. Contains five disulfide bonds. In terms of tissue distribution, expressed by the venom gland.

The protein localises to the secreted. The catalysed reaction is a 1,2-diacyl-sn-glycero-3-phosphocholine + H2O = a 2-acyl-sn-glycero-3-phosphocholine + a fatty acid + H(+). Catalyzes the hydrolysis of phosphatidylcholine with phospholipase A1 activity. May act as an allergen and induce hemolytic activity. The chain is Phospholipase A1 from Dinoponera quadriceps (South American ant).